The chain runs to 175 residues: Nucleoside-triphosphatase THEP1 (175 aa).

Residues 16-23 (GMPGVGKT) and 103-110 (VAFIDEIG) contribute to the ATP site.

The protein belongs to the THEP1 NTPase family.

The catalysed reaction is a ribonucleoside 5'-triphosphate + H2O = a ribonucleoside 5'-diphosphate + phosphate + H(+). Functionally, has nucleotide phosphatase activity towards ATP, GTP, CTP, TTP and UTP. May hydrolyze nucleoside diphosphates with lower efficiency. The polypeptide is Nucleoside-triphosphatase THEP1 (Pyrobaculum calidifontis (strain DSM 21063 / JCM 11548 / VA1)).